The chain runs to 197 residues: Probable adenylyl-sulfate kinase (197 aa).

ATP is bound at residue 33–40; sequence GLSGSGKS. The active-site Phosphoserine intermediate is Ser107.

This sequence belongs to the APS kinase family.

It catalyses the reaction adenosine 5'-phosphosulfate + ATP = 3'-phosphoadenylyl sulfate + ADP + H(+). The protein operates within sulfur metabolism; hydrogen sulfide biosynthesis; sulfite from sulfate: step 2/3. Functionally, catalyzes the synthesis of activated sulfate. The protein is Probable adenylyl-sulfate kinase (cysC) of Bacillus subtilis (strain 168).